Consider the following 373-residue polypeptide: Chaperone protein DnaJ (373 aa).

The J domain occupies 4-69 (NYYEILEISQ…EKRSIYDRYG (66 aa)). Residues 133–210 (GCKKKIDFSY…CHGNGYEEIK (78 aa)) form a CR-type zinc finger. Residues Cys146, Cys149, Cys162, Cys165, Cys184, Cys187, Cys198, and Cys201 each contribute to the Zn(2+) site. CXXCXGXG motif repeat units follow at residues 146–153 (CKSCKGSG), 162–169 (CPHCGGKG), 184–191 (CDHCKGSG), and 198–205 (CKTCHGNG).

Belongs to the DnaJ family. Homodimer. The cofactor is Zn(2+).

It is found in the cytoplasm. Participates actively in the response to hyperosmotic and heat shock by preventing the aggregation of stress-denatured proteins and by disaggregating proteins, also in an autonomous, DnaK-independent fashion. Unfolded proteins bind initially to DnaJ; upon interaction with the DnaJ-bound protein, DnaK hydrolyzes its bound ATP, resulting in the formation of a stable complex. GrpE releases ADP from DnaK; ATP binding to DnaK triggers the release of the substrate protein, thus completing the reaction cycle. Several rounds of ATP-dependent interactions between DnaJ, DnaK and GrpE are required for fully efficient folding. Also involved, together with DnaK and GrpE, in the DNA replication of plasmids through activation of initiation proteins. This chain is Chaperone protein DnaJ, found in Campylobacter lari (strain RM2100 / D67 / ATCC BAA-1060).